Here is a 187-residue protein sequence, read N- to C-terminus: Acireductone dioxygenase (187 aa).

Fe(2+) is bound by residues His-90, His-92, Glu-96, and His-135. Ni(2+) is bound by residues His-90, His-92, Glu-96, and His-135.

Belongs to the acireductone dioxygenase (ARD) family. Fe(2+) serves as cofactor. The cofactor is Ni(2+).

It localises to the cytoplasm. The protein localises to the nucleus. It catalyses the reaction 1,2-dihydroxy-5-(methylsulfanyl)pent-1-en-3-one + O2 = 4-methylsulfanyl-2-oxobutanoate + formate + 2 H(+). The enzyme catalyses 1,2-dihydroxy-5-(methylsulfanyl)pent-1-en-3-one + O2 = 3-(methylsulfanyl)propanoate + CO + formate + 2 H(+). It participates in amino-acid biosynthesis; L-methionine biosynthesis via salvage pathway; L-methionine from S-methyl-5-thio-alpha-D-ribose 1-phosphate: step 5/6. Its function is as follows. Catalyzes 2 different reactions between oxygen and the acireductone 1,2-dihydroxy-3-keto-5-methylthiopentene (DHK-MTPene) depending upon the metal bound in the active site. Fe-containing acireductone dioxygenase (Fe-ARD) produces formate and 2-keto-4-methylthiobutyrate (KMTB), the alpha-ketoacid precursor of methionine in the methionine recycle pathway. Ni-containing acireductone dioxygenase (Ni-ARD) produces methylthiopropionate, carbon monoxide and formate, and does not lie on the methionine recycle pathway. The polypeptide is Acireductone dioxygenase (Drosophila pseudoobscura pseudoobscura (Fruit fly)).